The following is a 141-amino-acid chain: Large ribosomal subunit protein uL11 (141 aa).

Belongs to the universal ribosomal protein uL11 family. As to quaternary structure, part of the ribosomal stalk of the 50S ribosomal subunit. Interacts with L10 and the large rRNA to form the base of the stalk. L10 forms an elongated spine to which L12 dimers bind in a sequential fashion forming a multimeric L10(L12)X complex. One or more lysine residues are methylated.

Its function is as follows. Forms part of the ribosomal stalk which helps the ribosome interact with GTP-bound translation factors. The chain is Large ribosomal subunit protein uL11 from Prochlorococcus marinus (strain MIT 9211).